Reading from the N-terminus, the 657-residue chain is uncharacterized protein (657 aa).

Catalysis depends on charge relay system residues serine 518 and histidine 631.

The protein belongs to the peptidase S9C family.

This is an uncharacterized protein from Bacillus subtilis (strain 168).